The sequence spans 549 residues: MAQLTEHPAHSALVAHHERVRDLHMRDLFAADSGRFDKLSLRLGDILFDYSKNRVTDETLGLLFDLARQAGVEARRDAMFAGEKINRTENRAVLHVALRNRANRPILVDGHDVMPDVNKVLNQMRIFCGRVHSGQWKGYSGKAITDVVNIGIGGSDLGPQMASLALAQYAVPGITSHFVSNVDGAHMVETLQRVSPETTLFIIASKTFTTLETMANAHDARDWFLAQAGDEAAVAKHFVALSTNAEAVAAFGIDTANMFAFWDWVGGRYSLWSAIGLSIALAVGFDNFEAMLEGAFLADEHFRSAPLERNIPVVMGLLGIWYNNYFGAQTQAILPYDQHLTRFAAYFQQGDMESNGKSVTNDGRFVDYTTGPIIWGEPGTNGQHAFYQLIHQGRKLIPCDFLAAAITRTPLGRHQDMLLSNFFAQTEALMKGKTVDEARAELADKVLGEAQLELLSKAKSFTGNRPTNSFLYRVLDPKTLGTLIALYEHKIFVQGTIWDINSYDQMGVELGKVLAGTILKELENDAPVASHDCSTNGLVNYYKELRLGD.

The active-site Proton donor is the Glu353. Catalysis depends on residues His384 and Lys512.

Belongs to the GPI family.

Its subcellular location is the cytoplasm. It carries out the reaction alpha-D-glucose 6-phosphate = beta-D-fructose 6-phosphate. Its pathway is carbohydrate biosynthesis; gluconeogenesis. It functions in the pathway carbohydrate degradation; glycolysis; D-glyceraldehyde 3-phosphate and glycerone phosphate from D-glucose: step 2/4. Functionally, catalyzes the reversible isomerization of glucose-6-phosphate to fructose-6-phosphate. The chain is Glucose-6-phosphate isomerase from Solidesulfovibrio magneticus (strain ATCC 700980 / DSM 13731 / RS-1) (Desulfovibrio magneticus).